Reading from the N-terminus, the 336-residue chain is Ketol-acid reductoisomerase (NADP(+)) (336 aa).

Residues 1 to 181 (MNVYYDKDCN…GGGRTGIIET (181 aa)) form the KARI N-terminal Rossmann domain. NADP(+) contacts are provided by residues 24–27 (YGSQ), arginine 47, serine 50, serine 52, and 82–85 (DEFQ). Histidine 107 is an active-site residue. Residue glycine 133 participates in NADP(+) binding. Residues 182–327 (TFQDETETDL…GKLRSMMPWI (146 aa)) enclose the KARI C-terminal knotted domain. Mg(2+) is bound by residues aspartate 190, glutamate 194, glutamate 226, and glutamate 230. A substrate-binding site is contributed by serine 251.

Belongs to the ketol-acid reductoisomerase family. The cofactor is Mg(2+).

The enzyme catalyses (2R)-2,3-dihydroxy-3-methylbutanoate + NADP(+) = (2S)-2-acetolactate + NADPH + H(+). It carries out the reaction (2R,3R)-2,3-dihydroxy-3-methylpentanoate + NADP(+) = (S)-2-ethyl-2-hydroxy-3-oxobutanoate + NADPH + H(+). It participates in amino-acid biosynthesis; L-isoleucine biosynthesis; L-isoleucine from 2-oxobutanoate: step 2/4. The protein operates within amino-acid biosynthesis; L-valine biosynthesis; L-valine from pyruvate: step 2/4. Functionally, involved in the biosynthesis of branched-chain amino acids (BCAA). Catalyzes an alkyl-migration followed by a ketol-acid reduction of (S)-2-acetolactate (S2AL) to yield (R)-2,3-dihydroxy-isovalerate. In the isomerase reaction, S2AL is rearranged via a Mg-dependent methyl migration to produce 3-hydroxy-3-methyl-2-ketobutyrate (HMKB). In the reductase reaction, this 2-ketoacid undergoes a metal-dependent reduction by NADPH to yield (R)-2,3-dihydroxy-isovalerate. The sequence is that of Ketol-acid reductoisomerase (NADP(+)) from Geotalea daltonii (strain DSM 22248 / JCM 15807 / FRC-32) (Geobacter daltonii).